The following is a 231-amino-acid chain: Protein crossbronx homolog (231 aa).

Residues 14 to 168 (LQEYKILTEY…VEECVRLSQA (155 aa)) enclose the UBC core domain.

It belongs to the ubiquitin-conjugating enzyme family. FTS subfamily.

The polypeptide is Protein crossbronx homolog (Culex quinquefasciatus (Southern house mosquito)).